The chain runs to 161 residues: Nucleotide-binding protein Rpic_2826 (161 aa).

It belongs to the YajQ family.

Functionally, nucleotide-binding protein. This chain is Nucleotide-binding protein Rpic_2826, found in Ralstonia pickettii (strain 12J).